The primary structure comprises 101 residues: NADH-quinone oxidoreductase subunit K (101 aa).

3 consecutive transmembrane segments (helical) span residues 4 to 24 (LAHYLVLGAILFAIAIVGIFL), 29 to 49 (IIIILMAIELMLLAVNTNFVA), and 61 to 81 (IFVFFVLTVAAAEAAIGLAIL).

The protein belongs to the complex I subunit 4L family. NDH-1 is composed of 14 different subunits. Subunits NuoA, H, J, K, L, M, N constitute the membrane sector of the complex.

The protein resides in the cell inner membrane. The enzyme catalyses a quinone + NADH + 5 H(+)(in) = a quinol + NAD(+) + 4 H(+)(out). Its function is as follows. NDH-1 shuttles electrons from NADH, via FMN and iron-sulfur (Fe-S) centers, to quinones in the respiratory chain. The immediate electron acceptor for the enzyme in this species is believed to be ubiquinone. Couples the redox reaction to proton translocation (for every two electrons transferred, four hydrogen ions are translocated across the cytoplasmic membrane), and thus conserves the redox energy in a proton gradient. This chain is NADH-quinone oxidoreductase subunit K, found in Burkholderia ambifaria (strain MC40-6).